Here is a 198-residue protein sequence, read N- to C-terminus: V-type proton ATPase subunit E (198 aa).

Belongs to the V-ATPase E subunit family.

Its function is as follows. Produces ATP from ADP in the presence of a proton gradient across the membrane. The protein is V-type proton ATPase subunit E of Borrelia hermsii (strain HS1 / DAH).